The following is an 83-amino-acid chain: Conotoxin Im22.1 (83 aa).

Positions 1 to 18 are cleaved as a signal peptide; that stretch reads MMMRVFIAMFFLLALVEA. A propeptide spanning residues 19–26 is cleaved from the precursor; sequence GWPRLYDK.

It belongs to the conotoxin E superfamily. Contain 4 disulfide bonds. As to expression, expressed by the venom duct.

The protein localises to the secreted. Probable neurotoxin. This chain is Conotoxin Im22.1, found in Conus imperialis (Imperial cone).